The primary structure comprises 23 residues: Profilin (23 aa).

It belongs to the profilin family. In terms of assembly, occurs in many kinds of cells as a complex with monomeric actin in a 1:1 ratio.

The protein resides in the cytoplasm. It localises to the cytoskeleton. Binds to actin and affects the structure of the cytoskeleton. At high concentrations, profilin prevents the polymerization of actin, whereas it enhances it at low concentrations. By binding to PIP2, it inhibits the formation of IP3 and DG. The polypeptide is Profilin (Beta vulgaris (Sugar beet)).